Here is a 489-residue protein sequence, read N- to C-terminus: Bifunctional protein HldE (489 aa).

A ribokinase region spans residues 1 to 328 (METENIHSFD…ELKAQLQDQP (328 aa)). 206–209 (NKKE) contributes to the ATP binding site. Asp276 is an active-site residue. Residues 357–489 (LTNGCFDLLH…IIQDIRNGRG (133 aa)) are cytidylyltransferase.

In the N-terminal section; belongs to the carbohydrate kinase PfkB family. It in the C-terminal section; belongs to the cytidylyltransferase family. Homodimer.

The catalysed reaction is D-glycero-beta-D-manno-heptose 7-phosphate + ATP = D-glycero-beta-D-manno-heptose 1,7-bisphosphate + ADP + H(+). The enzyme catalyses D-glycero-beta-D-manno-heptose 1-phosphate + ATP + H(+) = ADP-D-glycero-beta-D-manno-heptose + diphosphate. It functions in the pathway nucleotide-sugar biosynthesis; ADP-L-glycero-beta-D-manno-heptose biosynthesis; ADP-L-glycero-beta-D-manno-heptose from D-glycero-beta-D-manno-heptose 7-phosphate: step 1/4. The protein operates within nucleotide-sugar biosynthesis; ADP-L-glycero-beta-D-manno-heptose biosynthesis; ADP-L-glycero-beta-D-manno-heptose from D-glycero-beta-D-manno-heptose 7-phosphate: step 3/4. Catalyzes the phosphorylation of D-glycero-D-manno-heptose 7-phosphate at the C-1 position to selectively form D-glycero-beta-D-manno-heptose-1,7-bisphosphate. Its function is as follows. Catalyzes the ADP transfer from ATP to D-glycero-beta-D-manno-heptose 1-phosphate, yielding ADP-D-glycero-beta-D-manno-heptose. In Desulfatibacillum aliphaticivorans, this protein is Bifunctional protein HldE.